Reading from the N-terminus, the 128-residue chain is UPF0325 protein YaeH (128 aa).

Belongs to the UPF0325 family.

The polypeptide is UPF0325 protein YaeH (Escherichia fergusonii (strain ATCC 35469 / DSM 13698 / CCUG 18766 / IAM 14443 / JCM 21226 / LMG 7866 / NBRC 102419 / NCTC 12128 / CDC 0568-73)).